Reading from the N-terminus, the 118-residue chain is Large ribosomal subunit protein uL24 (118 aa).

The protein belongs to the universal ribosomal protein uL24 family. As to quaternary structure, part of the 50S ribosomal subunit.

One of two assembly initiator proteins, it binds directly to the 5'-end of the 23S rRNA, where it nucleates assembly of the 50S subunit. In terms of biological role, one of the proteins that surrounds the polypeptide exit tunnel on the outside of the subunit. The sequence is that of Large ribosomal subunit protein uL24 from Prochlorococcus marinus (strain MIT 9215).